A 499-amino-acid chain; its full sequence is Probable malate:quinone oxidoreductase 4 (499 aa).

Belongs to the MQO family. FAD serves as cofactor.

It catalyses the reaction (S)-malate + a quinone = a quinol + oxaloacetate. Its pathway is carbohydrate metabolism; tricarboxylic acid cycle; oxaloacetate from (S)-malate (quinone route): step 1/1. This Staphylococcus epidermidis (strain ATCC 35984 / DSM 28319 / BCRC 17069 / CCUG 31568 / BM 3577 / RP62A) protein is Probable malate:quinone oxidoreductase 4.